A 249-amino-acid chain; its full sequence is Inhibitor of growth protein 4 (249 aa).

The stretch at 25-118 (FQLMRDLDQR…ADLKEKQIES (94 aa)) forms a coiled coil. N6-acetyllysine is present on residues K112, K127, and K129. The interval 115-163 (QIESSDYDSSSSKGKKKGRTQKEKKAARARSKGKNSDEEAPKAAQKKLK) is disordered. Positions 127-148 (KGKKKGRTQKEKKAARARSKGK) match the Bipartite nuclear localization signal motif. R133 carries the citrulline modification. K146, K148, and K156 each carry N6-acetyllysine. R166 is subject to Citrulline. The segment at 196 to 245 (PTYCLCHQVSYGEMIGCDNPDCSIEWFHFACVGLTTKPRGKWFCPRCSQE) adopts a PHD-type zinc-finger fold. Zn(2+) contacts are provided by C199, C201, C212, C217, H223, C226, C239, and C242.

Belongs to the ING family. In terms of assembly, homodimer. Component of the HBO1 complex composed of KAT7/HBO1, MEAF6, ING4 or ING5, and one scaffold subunit: complexes containing BRPF scaffold (BRPF1, BRD1/BRPF2 or BRPF3) direct KAT7/HBO1 specificity towards H3K14ac, while complexes containing JADE scaffold (JADE1, JADE2 and JADE3) mediate acetylation of histone H4. Interacts with H3K4me3 and to a lesser extent with H3K4me2, the interaction augments KAT7/HBO1 acetylation activity on H3 tails. Interacts with EP300, RELA and TP53; these interactions may be indirect. Interacts with EGLN1. As to quaternary structure, interacts with BCL2A1. Citrullination by PADI4 within the nuclear localization signal disrupts the interaction with p53 and increases susceptibility to degradation. As to expression, isoform 2, isoform 3, isoform 4 and isoform 5 are expressed in the mammary gland, ovary, spleen and muscle. In terms of tissue distribution, expressed in the mammary gland, ovary, spleen and muscle.

It localises to the nucleus. In terms of biological role, component of HBO1 complexes, which specifically mediate acetylation of histone H3 at 'Lys-14' (H3K14ac), and have reduced activity toward histone H4. Through chromatin acetylation it may function in DNA replication. May inhibit tumor progression by modulating the transcriptional output of signaling pathways which regulate cell proliferation. Can suppress brain tumor angiogenesis through transcriptional repression of RELA/NFKB3 target genes when complexed with RELA. May also specifically suppress loss of contact inhibition elicited by activated oncogenes such as MYC. Represses hypoxia inducible factor's (HIF) activity by interacting with HIF prolyl hydroxylase 2 (EGLN1). Can enhance apoptosis induced by serum starvation in mammary epithelial cell line HC11. The polypeptide is Inhibitor of growth protein 4 (Ing4) (Mus musculus (Mouse)).